A 493-amino-acid chain; its full sequence is Acetylcholine receptor subunit beta (493 aa).

Residues 1 to 24 (MENVRRMALGLVVMMALALSGVGA) form the signal peptide. Residues 25 to 240 (SVMEDTLLSV…VTFYLIIQRK (216 aa)) are Extracellular-facing. A disulfide bridge links Cys-152 with Cys-166. Asn-165 is a glycosylation site (N-linked (GlcNAc...) asparagine). 3 consecutive transmembrane segments (helical) span residues 241 to 265 (PLFY…VFYL), 273 to 291 (MSLS…LLLA), and 307 to 328 (YLMF…VLNL). The Cytoplasmic segment spans residues 329–461 (HHRSPNTHTM…WQYVAMVADR (133 aa)). Tyr-379 is modified (phosphotyrosine; by Tyr-kinases). A helical transmembrane segment spans residues 462–480 (LFLYVFFVICSIGTFSIFL).

The protein belongs to the ligand-gated ion channel (TC 1.A.9) family. Acetylcholine receptor (TC 1.A.9.1) subfamily. Beta-1/CHRNB1 sub-subfamily. Pentamer of two alpha chains, and one each of the beta, delta, and gamma chains.

The protein localises to the postsynaptic cell membrane. It localises to the cell membrane. It carries out the reaction K(+)(in) = K(+)(out). It catalyses the reaction Na(+)(in) = Na(+)(out). In terms of biological role, after binding acetylcholine, the AChR responds by an extensive change in conformation that affects all subunits and leads to opening of an ion-conducting channel across the plasma membrane. The sequence is that of Acetylcholine receptor subunit beta (CHRNB1) from Tetronarce californica (Pacific electric ray).